Here is a 380-residue protein sequence, read N- to C-terminus: MNEEETNFVGIADLPNQRHKIVSRNGVAFTLMLCGESGLGKTTFCNTLFSTTIKSHMGPEKVRAKHAEKTVEIEITKAELEEKNFHLRLTVIDTPGFGDFINNSGCWESVVEFIEDQHESYMRQDQQPDRRKIIDMRIHACLYFLRPVRNGVRPMDLEAMKHISKRVNLIPVIAKADMYTRRDLALYKTRISQVLEYHQVNVYKPNMDEGDPVFHRQIQGIINCMPFAIVGSEDDIRTPDGRVVKGREYPWGIVEIENEEHCDFKQLRNILIRSCMLDLIQTTEEKLYEQYRQEQMKVRQYGEPKLRTIDNAKFKEEEENLRKRFTEQVRVEETRFRQWEQRLIAERDSLNKDLEAQHVQIKQIELEIERLKAATSSRKR.

Positions 25–298 (NGVAFTLMLC…EQYRQEQMKV (274 aa)) constitute a Septin-type G domain. The segment at 35-42 (GESGLGKT) is G1 motif. Residues 35-42 (GESGLGKT), Thr70, Gly96, 175-183 (KADMYTRRD), Gly231, and Arg247 contribute to the GTP site. Residues 93 to 96 (DTPG) are G3 motif. The interval 174–177 (AKAD) is G4 motif.

Belongs to the TRAFAC class TrmE-Era-EngA-EngB-Septin-like GTPase superfamily. Septin GTPase family. In terms of assembly, component of the septin complex composed of two copies of each spn1, spn2, spn3 and spn4.

The protein localises to the cytoplasm. It is found in the cell cortex. In terms of biological role, plays a role in the cell cycle. Involved in a late stage of septum formation leading to the separation of the daughter cells. This chain is Septin homolog spn4 (spn4), found in Schizosaccharomyces pombe (strain 972 / ATCC 24843) (Fission yeast).